We begin with the raw amino-acid sequence, 185 residues long: Elongation factor P (185 aa).

The protein belongs to the elongation factor P family.

The protein resides in the cytoplasm. It participates in protein biosynthesis; polypeptide chain elongation. Involved in peptide bond synthesis. Stimulates efficient translation and peptide-bond synthesis on native or reconstituted 70S ribosomes in vitro. Probably functions indirectly by altering the affinity of the ribosome for aminoacyl-tRNA, thus increasing their reactivity as acceptors for peptidyl transferase. In Nitrosomonas europaea (strain ATCC 19718 / CIP 103999 / KCTC 2705 / NBRC 14298), this protein is Elongation factor P.